We begin with the raw amino-acid sequence, 155 residues long: Interleukin-2 (155 aa).

The signal sequence occupies residues 1-20; sequence MYKMQLLSCIALTLVLVANS. O-linked (GalNAc...) threonine glycosylation occurs at threonine 24. A disulfide bond links cysteine 79 and cysteine 127. A glycan (N-linked (GlcNAc...) asparagine) is linked at asparagine 112.

It belongs to the IL-2 family.

The protein resides in the secreted. In terms of biological role, cytokine produced by activated CD4-positive helper T-cells and to a lesser extend activated CD8-positive T-cells and natural killer (NK) cells that plays pivotal roles in the immune response and tolerance. Binds to a receptor complex composed of either the high-affinity trimeric IL-2R (IL2RA/CD25, IL2RB/CD122 and IL2RG/CD132) or the low-affinity dimeric IL-2R (IL2RB and IL2RG). Interaction with the receptor leads to oligomerization and conformation changes in the IL-2R subunits resulting in downstream signaling starting with phosphorylation of JAK1 and JAK3. In turn, JAK1 and JAK3 phosphorylate the receptor to form a docking site leading to the phosphorylation of several substrates including STAT5. This process leads to activation of several pathways including STAT, phosphoinositide-3-kinase/PI3K and mitogen-activated protein kinase/MAPK pathways. Functions as a T-cell growth factor and can increase NK-cell cytolytic activity as well. Promotes strong proliferation of activated B-cells and subsequently immunoglobulin production. Plays a pivotal role in regulating the adaptive immune system by controlling the survival and proliferation of regulatory T-cells, which are required for the maintenance of immune tolerance. Moreover, participates in the differentiation and homeostasis of effector T-cell subsets, including Th1, Th2, Th17 as well as memory CD8-positive T-cells. This is Interleukin-2 (IL2) from Canis lupus familiaris (Dog).